Here is a 151-residue protein sequence, read N- to C-terminus: Small ribosomal subunit protein uS15 (151 aa).

This sequence belongs to the universal ribosomal protein uS15 family. Component of the small ribosomal subunit.

Its subcellular location is the cytoplasm. Functionally, component of the small ribosomal subunit. The ribosome is a large ribonucleoprotein complex responsible for the synthesis of proteins in the cell. This chain is Small ribosomal subunit protein uS15 (rps13), found in Xenopus laevis (African clawed frog).